A 99-amino-acid chain; its full sequence is Microcin E492 (99 aa).

The N-terminal stretch at 1–15 (MREISQKDLNLAFGA) is a signal peptide. Positions 80–99 (SWNGSGSGYNSATSSSGSGS) are disordered. Over residues 87–99 (GYNSATSSSGSGS) the composition is skewed to low complexity. S99 carries the serine microcin E492 siderophore ester modification.

This sequence belongs to the class IIa microcin family. Multimer. Possibly forms a homodimer or a homotrimer. The C-terminal Ser is modified by attachment to a siderophore similar to enterobactin, which can bind one atom of iron. The modification consists of an ester linkage of the serine carboxyl to O6 of a glucose which is linked by a C-glycosidic bond to the 5'-benzoyl of a linear triester of N-(2,3-dihydroxybenzoyl)serine. Presence of the siderophore ester increases the antibacterial activity of the protein.

Its function is as follows. Channel-forming bacteriocin. Forms cation-selective channels. Active on enterobacteria, with highest activity against E.coli. Not active on other Gram-negative bacteria, Gram-positive bacteria or fungi. The unmodified protein is active against E.coli and S.enteritidis. When the siderophore ester is present at Ser-99, antibacterial activity against these species is increased and activity is also detected against E.cloacae and K.pneumoniae. Neutralized by its immunity protein MceB. This Klebsiella pneumoniae protein is Microcin E492.